Consider the following 35-residue polypeptide: Potassium channel toxin alpha-KTx 6.1 (35 aa).

Disulfide bonds link Cys-4/Cys-25, Cys-10/Cys-30, Cys-14/Cys-32, and Cys-20/Cys-35.

The protein belongs to the short scorpion toxin superfamily. Potassium channel inhibitor family. Alpha-KTx 06 subfamily. Expressed by the venom gland.

It localises to the secreted. Its function is as follows. Potently and reversibly inhibits the insect voltage-gated Shaker (Sh) potassium channel (isoform alpha (B)), the mammalian voltage-gated potassium channels Kv1.2/KCNA2 (IC(50)=0.44 nM), and the calcium-activated potassium channel KCa2.3/KCNN3 (Kd=330 nM). Its effect on Kv1.3/KCNA3 is controversial, since this channel is voltage-independently inhibited in PubMed:9464266, but is not affected in PubMed:10931199. Furthermore, this toxin competes with apamin (a small conductance calcium-activated potassium channel inhibitor) for binding to rat brain synaptosomes. The sequence is that of Potassium channel toxin alpha-KTx 6.1 from Pandinus imperator (Emperor scorpion).